Consider the following 418-residue polypeptide: Putative O-antigen transporter (418 aa).

A run of 11 helical transmembrane segments spans residues 8-28 (VWNL…LGFL), 37-57 (FGVY…DVGL), 85-105 (FLVL…DGIV), 124-144 (LLAI…ILEG), 165-185 (IPAI…GLIF), 217-237 (LFFF…MVYF), 251-271 (VAFY…PAAI), 297-317 (LLMF…SGLV), 334-354 (LNVL…FSAI), 362-382 (ITAL…YFMV), and 385-405 (YGLL…ALLL).

It belongs to the polysaccharide synthase family.

The protein localises to the cell inner membrane. Its pathway is bacterial outer membrane biogenesis; lipopolysaccharide biosynthesis. Functionally, could be an O-antigen transporter. The polypeptide is Putative O-antigen transporter (rfbE) (Shigella flexneri).